A 182-amino-acid chain; its full sequence is Small ribosomal subunit protein uS4c (182 aa).

Positions Leu8–Gln36 are disordered. In terms of domain architecture, S4 RNA-binding spans Met82–Asn143.

The protein belongs to the universal ribosomal protein uS4 family. Part of the 30S ribosomal subunit. Contacts protein S5. The interaction surface between S4 and S5 is involved in control of translational fidelity.

It localises to the plastid. The protein localises to the chloroplast. In terms of biological role, one of the primary rRNA binding proteins, it binds directly to 16S rRNA where it nucleates assembly of the body of the 30S subunit. With S5 and S12 plays an important role in translational accuracy. This chain is Small ribosomal subunit protein uS4c (rps4), found in Dietes robinsoniana (Lord Howe wedding lily).